Reading from the N-terminus, the 119-residue chain is Large ribosomal subunit protein bL20 (119 aa).

This sequence belongs to the bacterial ribosomal protein bL20 family.

Functionally, binds directly to 23S ribosomal RNA and is necessary for the in vitro assembly process of the 50S ribosomal subunit. It is not involved in the protein synthesizing functions of that subunit. The chain is Large ribosomal subunit protein bL20 from Enterococcus faecalis (strain ATCC 700802 / V583).